Here is a 1827-residue protein sequence, read N- to C-terminus: Laminin subunit beta-4 (1827 aa).

A signal peptide spans 1 to 21 (MLLRLELSALLLLLIAAPVRL). Positions 26–266 (VGNSCYPNLG…ALYEMVVRGS (241 aa)) constitute a Laminin N-terminal domain. An N-linked (GlcNAc...) asparagine glycan is attached at N231. 19 cysteine pairs are disulfide-bonded: C267-C276, C269-C297, C299-C308, C311-C331, C334-C343, C336-C361, C364-C373, C376-C394, C397-C410, C399-C417, C419-C428, C431-C446, C449-C463, C451-C470, C472-C481, C484-C498, C501-C513, C503-C520, and C522-C531. Laminin EGF-like domains are found at residues 267–333 (CFCN…VCKR), 334–396 (CNCH…ACIP), 397–448 (CDCD…GCQL), and 449–500 (CRCN…GCIP). Residues 501–544 (CDCDIGGALKTECSSVDGQCKCRPNMVGQKCNDPAPGYFLAPLD) enclose the Laminin EGF-like 5; truncated domain. Positions 540-847 (LAPLDFYIYE…LIGSMSAFIH (308 aa)) constitute a Laminin IV type B domain. Intrachain disulfides connect C853/C865, C855/C872, C874/C883, C886/C898, C901/C913, C903/C920, C922/C931, C934/C944, C947/C956, C949/C963, C966/C975, C978/C992, C995/C1011, C997/C1022, C1024/C1033, C1036/C1051, C1054/C1068, C1056/C1075, C1078/C1087, C1090/C1103, C1106/C1126, C1108/C1133, C1135/C1144, C1147/C1160, C1163/C1175, C1165/C1182, C1184/C1193, C1196/C1208, C1211/C1223, C1213/C1230, C1232/C1241, and C1244/C1255. Laminin EGF-like domains lie at 853 to 900 (CNCH…GCSP), 901 to 946 (CDCD…LCRR), 947 to 994 (CQCN…PCEP), 995 to 1053 (CLCP…RCKE), 1054 to 1105 (CCCN…DCKE), 1106 to 1162 (CSCD…GCQP), 1163 to 1210 (CNCN…QCMF), and 1211 to 1257 (CDCN…ACEP). N1001 is a glycosylation site (N-linked (GlcNAc...) asparagine). Residues 1258–1449 (CHACNHLWEK…LSAANINEEV (192 aa)) form a domain II region. Coiled-coil stretches lie at residues 1294-1335 (ELQH…EIID) and 1385-1449 (NKIK…NEEV). The N-linked (GlcNAc...) asparagine glycan is linked to N1329. The tract at residues 1450-1476 (CGAPGDAECEKAKCGGALCGKCGGPDC) is domain alpha. The domain I stretch occupies residues 1477 to 1827 (TGSLPISLNA…KVQRYNLCSP (351 aa)). Residues N1485, N1496, N1513, N1533, N1599, N1629, N1644, N1672, N1686, N1702, N1726, N1745, N1750, and N1761 are each glycosylated (N-linked (GlcNAc...) asparagine). Coiled coils occupy residues 1485 to 1554 (NASK…EKVK) and 1584 to 1820 (DEIK…DKVQ).

In terms of assembly, laminin is a complex glycoprotein, consisting of three different polypeptide chains (alpha, beta, gamma), which are bound to each other by disulfide bonds into a cross-shaped molecule comprising one long and three short arms with globules at each end.

The protein resides in the secreted. The protein localises to the extracellular space. Its subcellular location is the extracellular matrix. It is found in the basement membrane. Its function is as follows. Binding to cells via a high affinity receptor, laminin is thought to mediate the attachment, migration and organization of cells into tissues during embryonic development by interacting with other extracellular matrix components. Positively regulates apical-basal distribution of Muller glia cells in the retina. This is Laminin subunit beta-4 (lamb4) from Danio rerio (Zebrafish).